We begin with the raw amino-acid sequence, 659 residues long: Putative RING finger protein R311 (659 aa).

The segment at 502 to 540 adopts an RING-type zinc-finger fold; the sequence is CPVCYDDDYIKTKLICGHTVCLTCVLNILPNSKGCPLCM.

This Acanthamoeba polyphaga (Amoeba) protein is Putative RING finger protein R311.